The following is a 333-amino-acid chain: Tetraacyldisaccharide 4'-kinase (333 aa).

Residue 55–62 (TAGGNGKT) participates in ATP binding.

Belongs to the LpxK family.

The enzyme catalyses a lipid A disaccharide + ATP = a lipid IVA + ADP + H(+). The protein operates within glycolipid biosynthesis; lipid IV(A) biosynthesis; lipid IV(A) from (3R)-3-hydroxytetradecanoyl-[acyl-carrier-protein] and UDP-N-acetyl-alpha-D-glucosamine: step 6/6. In terms of biological role, transfers the gamma-phosphate of ATP to the 4'-position of a tetraacyldisaccharide 1-phosphate intermediate (termed DS-1-P) to form tetraacyldisaccharide 1,4'-bis-phosphate (lipid IVA). This Pectobacterium carotovorum subsp. carotovorum (strain PC1) protein is Tetraacyldisaccharide 4'-kinase.